A 739-amino-acid polypeptide reads, in one-letter code: Polyribonucleotide nucleotidyltransferase (739 aa).

Mg(2+) is bound by residues Asp487 and Asp493. One can recognise a KH domain in the interval 554-613; it reads PRIETMQIPTDKIRDVIGTGGKVIREIVEKTGAKINIEDTGVVKIASADGKAIKAAYNWI. Positions 623 to 691 constitute an S1 motif domain; that stretch reads GVIYDGTIVK…DRGKIRLSMK (69 aa). Residues 694–739 are disordered; that stretch reads DQQTGEDITDKIKAQRDAERAERGDEPREPREGGRHRGERRREAGE. The segment covering 701 to 739 has biased composition (basic and acidic residues); the sequence is ITDKIKAQRDAERAERGDEPREPREGGRHRGERRREAGE.

The protein belongs to the polyribonucleotide nucleotidyltransferase family. The cofactor is Mg(2+).

The protein resides in the cytoplasm. The catalysed reaction is RNA(n+1) + phosphate = RNA(n) + a ribonucleoside 5'-diphosphate. Functionally, involved in mRNA degradation. Catalyzes the phosphorolysis of single-stranded polyribonucleotides processively in the 3'- to 5'-direction. The sequence is that of Polyribonucleotide nucleotidyltransferase from Methylobacterium radiotolerans (strain ATCC 27329 / DSM 1819 / JCM 2831 / NBRC 15690 / NCIMB 10815 / 0-1).